A 607-amino-acid chain; its full sequence is Threonine--tRNA ligase (607 aa).

The tract at residues 200–502 (DHRKLGRELG…LIEEYAGDFP (303 aa)) is catalytic. Residues Cys-299, His-350, and His-479 each contribute to the Zn(2+) site.

It belongs to the class-II aminoacyl-tRNA synthetase family. In terms of assembly, homodimer. Zn(2+) serves as cofactor.

The protein localises to the cytoplasm. The catalysed reaction is tRNA(Thr) + L-threonine + ATP = L-threonyl-tRNA(Thr) + AMP + diphosphate + H(+). Functionally, catalyzes the attachment of threonine to tRNA(Thr) in a two-step reaction: L-threonine is first activated by ATP to form Thr-AMP and then transferred to the acceptor end of tRNA(Thr). Also edits incorrectly charged L-seryl-tRNA(Thr). This is Threonine--tRNA ligase from Synechococcus sp. (strain ATCC 27144 / PCC 6301 / SAUG 1402/1) (Anacystis nidulans).